Consider the following 565-residue polypeptide: Heme/hemopexin transporter protein HuxB (565 aa).

The first 26 residues, 1 to 26, serve as a signal peptide directing secretion; the sequence is MKMRPRYSVIASAVSLGFVLSKSVMA. Residues 73 to 150 enclose the POTRA domain; it reads FPLTQVQILD…GTVKILLLKG (78 aa).

Belongs to the TPS (TC 1.B.20) family.

Its subcellular location is the cell outer membrane. Functionally, likely functions in the release of soluble HxuA from the cell. In terms of biological role, probable member of a two partner secretion pathway (TPS) in which it mediates the secretion of HuxA. In Haemophilus influenzae, this protein is Heme/hemopexin transporter protein HuxB (hxuB).